A 492-amino-acid polypeptide reads, in one-letter code: Putative sucrose transport protein SUC6 (492 aa).

The disordered stretch occupies residues 1 to 26 (MSDLQANKDAAAVNRQSSSSSADLNG). The Cytoplasmic portion of the chain corresponds to 1-33 (MSDLQANKDAAAVNRQSSSSSADLNGPSPMRKM). Positions 14-23 (NRQSSSSSAD) are enriched in polar residues. Phosphoserine is present on serine 17. Residues 34-54 (ISVASIAAGIQFGWALQLSLL) traverse the membrane as a helical segment. The Extracellular portion of the chain corresponds to 55 to 68 (TPYVQLLGVPHKWS). The helical transmembrane segment at 69-89 (SFIWLCGPVSGLLVQPSVGYF) threads the bilayer. The Cytoplasmic segment spans residues 90-101 (SDRCKSRFGRRR). A helical membrane pass occupies residues 102-122 (PFIAMGALLVAVAVVLIGYAA). Topologically, residues 123 to 139 (DFGHSMGDKVDEPVKMR) are extracellular. The helical transmembrane segment at 140 to 160 (AVVIFALGFWILDVANNTLQG) threads the bilayer. The Cytoplasmic segment spans residues 161-181 (PCRAFLGDLAAGDAKKTRTAN). A helical transmembrane segment spans residues 182–202 (AFFSFFMAVGNVLGYAAGSYT). At 203–224 (NLYKIFPFTMTKACDIYCANLK) the chain is on the extracellular side. Residues 225–245 (SCFFLSITLLLVVTIIALWYV) traverse the membrane as a helical segment. At 246 to 277 (EDKQWSPKADSDNEKTPFFGEIFGAFKVMKRP) the chain is on the cytoplasmic side. The helical transmembrane segment at 278-298 (MWMLLIVTALNWIAWFPFLLY) threads the bilayer. Residues 299-324 (DTDWMGREVYGGDSKGDDKMKKLYNQ) are Extracellular-facing. Residues 325–345 (GIHVGGLGLMLNSIVLGFMSL) traverse the membrane as a helical segment. At 346–359 (GIEGISRKMGGAKR) the chain is on the cytoplasmic side. The helical transmembrane segment at 360-380 (LWGAVNIILAVCLAMTVLVTK) threads the bilayer. Over 381–403 (KAEEHRRIAGPMALPTDGIRAGA) the chain is Extracellular. The helical transmembrane segment at 404–424 (LTLFALLGIPLAITFSIPFAL) threads the bilayer. At 425-446 (ASIISSSSGAGQGLSLGVLNMT) the chain is on the cytoplasmic side. A helical membrane pass occupies residues 447-467 (IVIPQMVVSFGVGPIDALFGG). At 468–469 (GN) the chain is on the extracellular side. A helical membrane pass occupies residues 470 to 490 (LPGFVVGAIAAAISSVVAFSV). Over 491 to 492 (LP) the chain is Cytoplasmic.

This sequence belongs to the glycoside-pentoside-hexuronide (GPH) cation symporter transporter (TC 2.A.2.4) family.

Its subcellular location is the cell membrane. Its pathway is glycan biosynthesis; sucrose metabolism. Its function is as follows. May be responsible for the transport of glucosides into the cell, with the concomitant uptake of protons (symport system). Does not seem to transport sucrose. The protein is Putative sucrose transport protein SUC6 of Arabidopsis thaliana (Mouse-ear cress).